We begin with the raw amino-acid sequence, 746 residues long: UvrABC system protein C (746 aa).

Positions 18 to 97 (AKPGVYKWRD…IKEFDPRFNV (80 aa)) constitute a GIY-YIG domain. One can recognise a UVR domain in the interval 211 to 246 (RPYIAQLTRDMKEASAELEFEKAARLRDQIQMLETV). The segment at 557 to 577 (ANGNDNGEGGSDISGKGHAVP) is disordered.

It belongs to the UvrC family. Interacts with UvrB in an incision complex.

Its subcellular location is the cytoplasm. The UvrABC repair system catalyzes the recognition and processing of DNA lesions. UvrC both incises the 5' and 3' sides of the lesion. The N-terminal half is responsible for the 3' incision and the C-terminal half is responsible for the 5' incision. The chain is UvrABC system protein C from Bifidobacterium longum (strain NCC 2705).